Here is a 171-residue protein sequence, read N- to C-terminus: Flavodoxin (171 aa).

Residues 4-166 (IGLFVGTTTG…RIKEWVKQLK (163 aa)) form the Flavodoxin-like domain.

The protein belongs to the flavodoxin family. It depends on FMN as a cofactor.

In terms of biological role, low-potential electron donor to a number of redox enzymes. This Trichodesmium erythraeum (strain IMS101) protein is Flavodoxin (fld).